The following is a 408-amino-acid chain: Argininosuccinate synthase (408 aa).

ATP contacts are provided by residues 14-22 (AYSGGLDTS) and Ala-41. L-citrulline contacts are provided by Tyr-92 and Ser-97. Gly-122 contacts ATP. L-aspartate contacts are provided by Thr-124, Asn-128, and Asp-129. Asn-128 contributes to the L-citrulline binding site. The L-citrulline site is built by Arg-132, Ser-181, Ser-190, Glu-266, and Tyr-278.

This sequence belongs to the argininosuccinate synthase family. Type 1 subfamily. In terms of assembly, homotetramer.

The protein localises to the cytoplasm. The catalysed reaction is L-citrulline + L-aspartate + ATP = 2-(N(omega)-L-arginino)succinate + AMP + diphosphate + H(+). It participates in amino-acid biosynthesis; L-arginine biosynthesis; L-arginine from L-ornithine and carbamoyl phosphate: step 2/3. The sequence is that of Argininosuccinate synthase from Pelobacter propionicus (strain DSM 2379 / NBRC 103807 / OttBd1).